We begin with the raw amino-acid sequence, 1905 residues long: Bromodomain adjacent to zinc finger domain protein 2A (1905 aa).

Disordered regions lie at residues 1 to 59 (MEME…NGLS) and 362 to 434 (TSIF…PTTS). Polar residues-rich tracts occupy residues 35–59 (TNGS…NGLS), 379–391 (LQDN…NGSD), and 399–420 (TQSS…STIQ). At Thr507 the chain carries Phosphothreonine. Residue Ser509 is modified to Phosphoserine. Residues 546-617 (IATPEEVRLP…EHFSFSPRMP (72 aa)) enclose the MBD domain. Thr548 carries the post-translational modification Phosphothreonine. Ser613 carries the phosphoserine modification. The tract at residues 648–792 (ITGKRGRPRN…KEKEEVTKAK (145 aa)) is disordered. 2 DNA-binding regions (a.T hook) span residues 649–661 (TGKR…TEKA) and 670–682 (KRGR…VKIT). Residues 656 to 668 (RNTEKAKTKEVPK) show a composition bias toward basic and acidic residues. Residues 669–678 (VKRGRGRPPK) are compositionally biased toward basic residues. An N6-acetyllysine; by KAT8 modification is found at Lys680. Residues 686 to 709 (NKTDNRPLKKLEAQETLNEEDKAK) show a composition bias toward basic and acidic residues. The stretch at 693–792 (LKKLEAQETL…KEKEEVTKAK (100 aa)) forms a coiled coil. Positions 710 to 721 (IAKSKKKMRQKV) are enriched in basic residues. The segment covering 725–734 (ECQTTIQGQA) has biased composition (polar residues). Basic and acidic residues-rich tracts occupy residues 739 to 748 (KQETKSLKQK) and 756 to 792 (AEKE…TKAK). An N6-acetyllysine modification is found at Lys799. The DDT domain occupies 848 to 913 (SGAFSDCLTI…LKAALHDPGF (66 aa)). Lys866 participates in a covalent cross-link: Glycyl lysine isopeptide (Lys-Gly) (interchain with G-Cter in SUMO2). Residue Ser1051 is modified to Phosphoserine. Residues Lys1150 and Lys1172 each participate in a glycyl lysine isopeptide (Lys-Gly) (interchain with G-Cter in SUMO2) cross-link. 3 disordered regions span residues 1178–1220 (SNTT…PQAQ), 1283–1318 (LSSS…SSPD), and 1330–1412 (MPCN…RPPS). Phosphoserine is present on Ser1184. Positions 1186-1198 (ARARGRPRKTKPG) form a DNA-binding region, a.T hook 3. Low complexity predominate over residues 1283 to 1293 (LSSSVLTPDSS). Residues 1306-1315 (EEPEPDEAES) are compositionally biased toward acidic residues. Residues 1345–1359 (DQPTPSPQQLASSKP) are compositionally biased toward polar residues. Ser1397 carries the phosphoserine modification. Positions 1404 to 1416 (PKRRGRPPSKFFK) form a DNA-binding region, a.T hook 4. The residue at position 1559 (Ser1559) is a Phosphoserine. Glycyl lysine isopeptide (Lys-Gly) (interchain with G-Cter in SUMO2) cross-links involve residues Lys1676 and Lys1709. Residues 1676-1726 (KVTCLVCRKGDNDEFLLLCDGCDRGCHIYCHRPKMEAVPEGDWFCTVCLAQ) form a PHD-type zinc finger. Disordered regions lie at residues 1734–1755 (QKPG…NFSE) and 1769–1789 (ESPA…KRRR). Phosphoserine is present on residues Ser1747, Ser1770, Ser1783, and Ser1785. The Bromo domain maps to 1793–1897 (RNHHSDLTFC…RFFESRWEEF (105 aa)).

Belongs to the WAL family. As to quaternary structure, component of the NoRC-1 ISWI chromatin remodeling complex at least composed of SMARCA1 and BAZ2A/TIP5, which regulates the spacing of histone octamers on the DNA template to facilitate access to DNA. Within the NoRC-1 ISWI chromatin remodeling complex interacts with SMARCA1; the interaction is direct. Component of the NoRC-5 ISWI chromatin remodeling complex (also called the NoRC nucleolar-remodeling complex), at least composed of SMARCA5/SNF2H and BAZ2A/TIP5, which regulates the spacing of histone octamers on the DNA template to facilitate access to DNA. Within the NoRC-5 ISWI chromatin remodeling complexes interacts with SMARCA5/SNF2H; the interaction is direct. Interacts with TTF1; the interaction is required for recruitment of the NoRC-5 ISWI chromatin remodeling complex to rDNA. Interacts with HDAC1. Interacts with SIN3A. Interacts with DNMT1 and DNM3B. Interacts with BEND3 and USP21. Acetylation at Lys-680 by KAT8/MOF promotes its dissociation from pRNA, affecting heterochromatin formation, nucleosome positioning and rDNA silencing. Deacetylation by SIRT1 in late S phase enhances pRNA-binding, allowing de novo DNA methylation and heterochromatin formation. Acetylation is high during S phase and declines to background levels in late S phase when the silent copies of rRNA genes are replicated. Post-translationally, ubiquitinated. Deubiquitinated by USP21 leading to its stabilization. As to expression, expressed at moderate levels in most tissues analyzed, including heart, brain, placenta, lung, skeletal muscle, kidney and pancreas.

The protein localises to the nucleus. The protein resides in the nucleolus. In terms of biological role, regulatory subunit of the ATP-dependent NoRC-1 and NoRC-5 ISWI chromatin remodeling complexes, which form ordered nucleosome arrays on chromatin and facilitate access to DNA during DNA-templated processes such as DNA replication, transcription, and repair. Both complexes regulate the spacing of nucleosomes along the chromatin and have the ability to slide mononucleosomes to the center of a DNA template. Directly stimulates the ATPase activity of SMARCA5 in the NoRC-5 ISWI chromatin remodeling complex. The NoRC-1 ISWI chromatin remodeling complex has a lower ATP hydrolysis rate than the NoRC-5 ISWI chromatin remodeling complex. Within the NoRC-5 ISWI chromatin remodeling complex, mediates silencing of a fraction of rDNA by recruiting histone-modifying enzymes and DNA methyltransferases, leading to heterochromatin formation and transcriptional silencing. In the complex, it plays a central role by being recruited to rDNA and by targeting chromatin modifying enzymes such as HDAC1, leading to repress RNA polymerase I transcription. Recruited to rDNA via its interaction with TTF1 and its ability to recognize and bind histone H4 acetylated on 'Lys-16' (H4K16ac), leading to deacetylation of H4K5ac, H4K8ac, H4K12ac but not H4K16ac. Specifically binds pRNAs, 150-250 nucleotide RNAs that are complementary in sequence to the rDNA promoter; pRNA-binding is required for heterochromatin formation and rDNA silencing. The polypeptide is Bromodomain adjacent to zinc finger domain protein 2A (BAZ2A) (Homo sapiens (Human)).